We begin with the raw amino-acid sequence, 353 residues long: Peptide methionine sulfoxide reductase MsrA/MsrB (353 aa).

Residues 43–196 form a peptide methionine sulfoxide reductase A region; that stretch reads REIYLAGGCF…PNGYCHIDIT (154 aa). The active site involves Cys-51. Positions 213-336 constitute a MsrB domain; it reads DAELKAKLTP…NSASIKFIPL (124 aa). Cys-325 serves as the catalytic Nucleophile.

In the N-terminal section; belongs to the MsrA Met sulfoxide reductase family. The protein in the C-terminal section; belongs to the MsrB Met sulfoxide reductase family.

It catalyses the reaction L-methionyl-[protein] + [thioredoxin]-disulfide + H2O = L-methionyl-(S)-S-oxide-[protein] + [thioredoxin]-dithiol. It carries out the reaction [thioredoxin]-disulfide + L-methionine + H2O = L-methionine (S)-S-oxide + [thioredoxin]-dithiol. The catalysed reaction is L-methionyl-[protein] + [thioredoxin]-disulfide + H2O = L-methionyl-(R)-S-oxide-[protein] + [thioredoxin]-dithiol. Its function is as follows. Has an important function as a repair enzyme for proteins that have been inactivated by oxidation. Catalyzes the reversible oxidation-reduction of methionine sulfoxide in proteins to methionine. This Haemophilus influenzae (strain ATCC 51907 / DSM 11121 / KW20 / Rd) protein is Peptide methionine sulfoxide reductase MsrA/MsrB (msrAB).